The sequence spans 119 residues: HTH-type transcriptional regulator SarX (119 aa).

Residues 55 to 78 constitute a DNA-binding region (H-T-H motif); it reads LKTAMDELDLSRTKLLVSIRRLIE.

Belongs to the SarA family.

The protein resides in the cytoplasm. In terms of biological role, involved in the regulation of virulence genes. Acts as a repressor of the agr locus and consequently targets genes regulated by the agr system such as sspA, hla and hlb. Binds directly to the agr promoter region. The protein is HTH-type transcriptional regulator SarX (sarX) of Staphylococcus aureus (strain bovine RF122 / ET3-1).